Reading from the N-terminus, the 113-residue chain is Holo-[acyl-carrier-protein] synthase (113 aa).

Mg(2+) is bound by residues Asp5 and Glu50.

This sequence belongs to the P-Pant transferase superfamily. AcpS family. Requires Mg(2+) as cofactor.

The protein localises to the cytoplasm. It carries out the reaction apo-[ACP] + CoA = holo-[ACP] + adenosine 3',5'-bisphosphate + H(+). Functionally, transfers the 4'-phosphopantetheine moiety from coenzyme A to a Ser of acyl-carrier-protein. In Nautilia profundicola (strain ATCC BAA-1463 / DSM 18972 / AmH), this protein is Holo-[acyl-carrier-protein] synthase.